Here is a 213-residue protein sequence, read N- to C-terminus: Pyridoxine/pyridoxamine 5'-phosphate oxidase (213 aa).

Residues 9 to 12 (RKDY) and lysine 67 each bind substrate. FMN-binding positions include 62–67 (RIVLLK), 77–78 (FT), arginine 83, lysine 84, and glutamine 106. Substrate-binding residues include tyrosine 124, arginine 128, and serine 132. Residues 141 to 142 (QS) and tryptophan 186 each bind FMN. Substrate is bound at residue 192–194 (RLH). An FMN-binding site is contributed by arginine 196.

It belongs to the pyridoxamine 5'-phosphate oxidase family. In terms of assembly, homodimer. It depends on FMN as a cofactor.

The enzyme catalyses pyridoxamine 5'-phosphate + O2 + H2O = pyridoxal 5'-phosphate + H2O2 + NH4(+). The catalysed reaction is pyridoxine 5'-phosphate + O2 = pyridoxal 5'-phosphate + H2O2. Its pathway is cofactor metabolism; pyridoxal 5'-phosphate salvage; pyridoxal 5'-phosphate from pyridoxamine 5'-phosphate: step 1/1. It participates in cofactor metabolism; pyridoxal 5'-phosphate salvage; pyridoxal 5'-phosphate from pyridoxine 5'-phosphate: step 1/1. Its function is as follows. Catalyzes the oxidation of either pyridoxine 5'-phosphate (PNP) or pyridoxamine 5'-phosphate (PMP) into pyridoxal 5'-phosphate (PLP). The chain is Pyridoxine/pyridoxamine 5'-phosphate oxidase from Cyanothece sp. (strain PCC 7425 / ATCC 29141).